Consider the following 625-residue polypeptide: Putative surface protein bspA-like (625 aa).

Residues 1–548 (MMTPGKSSKT…KAIKGGEIAG (548 aa)) are Extracellular-facing. An N-linked (GlcNAc...) asparagine glycan is attached at Asn-15. LRR repeat units lie at residues 38–60 (CSSF…AFTG), 61–83 (CSSL…AFSE), 85–106 (SSIT…AFSG), 107–129 (CSKL…AFRG), 153–175 (CSSL…AFYG), 176–198 (CSSL…AFQE), 200–221 (SKLT…AFKR), 222–245 (CSSL…FYEC), 247–267 (KLTS…AFSK), 271–293 (LTSI…VFLN), 325–347 (IPKS…TLTH), 348–368 (FTNL…PESF), and 369–392 (IEGD…AFKD). An N-linked (GlcNAc...) asparagine glycan is attached at Asn-227. The tract at residues 439-538 (KQSEENPNQP…TDDPSKSKEN (100 aa)) is disordered. The span at 443 to 526 (ENPNQPGENP…QPGENPSQPG (84 aa)) shows a compositional bias: low complexity. The helical transmembrane segment at 549–571 (IIIGSLIGICLVVAICFGVYYYF) threads the bilayer. Over 572–625 (MRIKPKNKNDDNEGNQEDTIANGTNEVTNENVLATFDEQPNNESDSNGLDSAEV) the chain is Cytoplasmic. The segment at 577–625 (KNKNDDNEGNQEDTIANGTNEVTNENVLATFDEQPNNESDSNGLDSAEV) is disordered. The segment covering 588–625 (EDTIANGTNEVTNENVLATFDEQPNNESDSNGLDSAEV) has biased composition (polar residues).

It localises to the cell membrane. Its function is as follows. May bind host tissue. This chain is Putative surface protein bspA-like (BSPAL1), found in Trichomonas vaginalis.